Here is a 281-residue protein sequence, read N- to C-terminus: NADH-quinone oxidoreductase subunit B (281 aa).

Cys37, Cys38, Cys103, and Cys132 together coordinate [4Fe-4S] cluster. The interval 242 to 281 (DAKPLDESRAHGPGPTTADIADAADTADSDAAPGATHDTP) is disordered. Over residues 257-281 (TTADIADAADTADSDAAPGATHDTP) the composition is skewed to low complexity.

It belongs to the complex I 20 kDa subunit family. In terms of assembly, NDH-1 is composed of 14 different subunits. Subunits NuoB, C, D, E, F, and G constitute the peripheral sector of the complex. [4Fe-4S] cluster is required as a cofactor.

The protein localises to the cell membrane. The enzyme catalyses a quinone + NADH + 5 H(+)(in) = a quinol + NAD(+) + 4 H(+)(out). Functionally, NDH-1 shuttles electrons from NADH, via FMN and iron-sulfur (Fe-S) centers, to quinones in the respiratory chain. The immediate electron acceptor for the enzyme in this species is believed to be a menaquinone. Couples the redox reaction to proton translocation (for every two electrons transferred, four hydrogen ions are translocated across the cytoplasmic membrane), and thus conserves the redox energy in a proton gradient. The chain is NADH-quinone oxidoreductase subunit B from Frankia alni (strain DSM 45986 / CECT 9034 / ACN14a).